The primary structure comprises 97 residues: Peptide YY (97 aa).

Positions 1 to 28 are cleaved as a signal peptide; that stretch reads MMSGRRSWPAMATVLLTLLVCLGELVDA. Ser41 bears the Phosphoserine mark. Phe64 carries the post-translational modification Phenylalanine amide. The propeptide occupies 68–97; sequence DFSEALLSILLFPDREDPPVKSRPEGAYLW.

Belongs to the NPY family.

Its subcellular location is the secreted. This gut peptide inhibits exocrine pancreatic secretion, has a vasoconstrictory action and inhibitis jejunal and colonic mobility. The protein is Peptide YY (PYY) of Bos taurus (Bovine).